Reading from the N-terminus, the 324-residue chain is UDP-galactose transporter homolog 1 (324 aa).

2 helical membrane-spanning segments follow: residues 7 to 27 and 42 to 62; these read LVIA…AQEP and HSSF…LCYL. N-linked (GlcNAc...) asparagine glycosylation occurs at N97. The next 7 membrane-spanning stretches (helical) occupy residues 106–126, 135–155, 161–181, 199–219, 237–257, 265–285, and 290–310; these read VGYM…HVLV, KALV…GGAE, ASLY…LTNA, HLMV…LVLF, ILTY…FVFF, LVLA…SIVV, and VRPV…WETV.

It belongs to the nucleotide-sugar transporter family. SLC35B subfamily.

It localises to the endoplasmic reticulum membrane. Functionally, may be involved in specific transport of UDP-Gal from the cytosol to the Golgi lumen. Involved in the maintenance of optimal conditions for the folding of secretory pathway proteins in the endoplasmic reticulum. This is UDP-galactose transporter homolog 1 (HUT1) from Eremothecium gossypii (strain ATCC 10895 / CBS 109.51 / FGSC 9923 / NRRL Y-1056) (Yeast).